The primary structure comprises 845 residues: Beta-glucosidase (845 aa).

N66 carries an N-linked (GlcNAc...) asparagine glycan. Residue D225 is part of the active site. 3 N-linked (GlcNAc...) asparagine glycosylation sites follow: N304, N438, and N621. One can recognise a PA14 domain in the interval 408 to 568 (AENAGLIAKF…DDDEEIRNAA (161 aa)).

Belongs to the glycosyl hydrolase 3 family. As to quaternary structure, homotetramer.

The catalysed reaction is Hydrolysis of terminal, non-reducing beta-D-glucosyl residues with release of beta-D-glucose.. Its pathway is glycan metabolism; cellulose degradation. This Kluyveromyces marxianus (Yeast) protein is Beta-glucosidase.